Reading from the N-terminus, the 239-residue chain is Phosphoadenosine 5'-phosphosulfate reductase (239 aa).

C235 functions as the Nucleophile; cysteine thiosulfonate intermediate in the catalytic mechanism.

The protein belongs to the PAPS reductase family. CysH subfamily.

It localises to the cytoplasm. The enzyme catalyses [thioredoxin]-disulfide + sulfite + adenosine 3',5'-bisphosphate + 2 H(+) = [thioredoxin]-dithiol + 3'-phosphoadenylyl sulfate. It participates in sulfur metabolism; hydrogen sulfide biosynthesis; sulfite from sulfate: step 3/3. Catalyzes the formation of sulfite from phosphoadenosine 5'-phosphosulfate (PAPS) using thioredoxin as an electron donor. The polypeptide is Phosphoadenosine 5'-phosphosulfate reductase (Thiocapsa roseopersicina).